The chain runs to 257 residues: 3-dehydroquinate dehydratase (257 aa).

Residues 50–52 (EWR) and arginine 86 each bind 3-dehydroquinate. Histidine 147 serves as the catalytic Proton donor/acceptor. Catalysis depends on lysine 174, which acts as the Schiff-base intermediate with substrate. 3-dehydroquinate contacts are provided by arginine 216, serine 235, and glutamine 239.

It belongs to the type-I 3-dehydroquinase family. In terms of assembly, homodimer.

The catalysed reaction is 3-dehydroquinate = 3-dehydroshikimate + H2O. It participates in metabolic intermediate biosynthesis; chorismate biosynthesis; chorismate from D-erythrose 4-phosphate and phosphoenolpyruvate: step 3/7. Functionally, involved in the third step of the chorismate pathway, which leads to the biosynthesis of aromatic amino acids. Catalyzes the cis-dehydration of 3-dehydroquinate (DHQ) and introduces the first double bond of the aromatic ring to yield 3-dehydroshikimate. The chain is 3-dehydroquinate dehydratase from Geobacillus kaustophilus (strain HTA426).